We begin with the raw amino-acid sequence, 466 residues long: Protein tilB homolog (466 aa).

4 LRR repeats span residues 22 to 43 (SLEELSLHQQEIERLEHIDKWC), 45 to 66 (DLKILYLQNNLIGKIENVSKLK), 67 to 88 (KLEYLNLALNNIEKIENLEGCE), and 89 to 110 (ELAKLDLTVNFIGELSSIKTLK). Residues 123 to 161 (NPCAFFDHYREFVVATLPQLKWLDGKGIEPSERIKALQE) enclose the LRRCT domain. A coiled-coil region spans residues 178–204 (LKRAKLKEEAQRKHQEEDKNEDKRSNA). 2 stretches are compositionally biased toward basic and acidic residues: residues 185 to 202 (EEAQRKHQEEDKNEDKRS) and 269 to 279 (EKQRKNQEKLS). Disordered stretches follow at residues 185-206 (EEAQRKHQEEDKNEDKRSNAGF) and 269-288 (EKQRKNQEKLSERKKKVKPP). In terms of domain architecture, CS spans 301 to 396 (VNEPKIDFSL…GGQRAFTSVK (96 aa)). A disordered region spans residues 418-466 (VDPSKHSFPDVTNIVQGKKHTPRRRPEPKIIPSEEDPTFEDNPEVPPLI). Residues 450–460 (SEEDPTFEDNP) are compositionally biased toward acidic residues.

This sequence belongs to the tilB family. In terms of assembly, interacts (via CS domain) with ZMYND10 (via C-terminus).

The protein resides in the cytoplasm. The protein localises to the cell projection. Its subcellular location is the cilium. Functionally, may play a role in dynein arm assembly, hence essential for proper axoneme building for cilia motility. The chain is Protein tilB homolog (LRCC6) from Macaca fascicularis (Crab-eating macaque).